Here is a 339-residue protein sequence, read N- to C-terminus: Phenylalanine--tRNA ligase alpha subunit (339 aa).

E254 serves as a coordination point for Mg(2+).

Belongs to the class-II aminoacyl-tRNA synthetase family. Phe-tRNA synthetase alpha subunit type 1 subfamily. As to quaternary structure, tetramer of two alpha and two beta subunits. Mg(2+) serves as cofactor.

The protein resides in the cytoplasm. The enzyme catalyses tRNA(Phe) + L-phenylalanine + ATP = L-phenylalanyl-tRNA(Phe) + AMP + diphosphate + H(+). The chain is Phenylalanine--tRNA ligase alpha subunit from Clostridium tetani (strain Massachusetts / E88).